The sequence spans 443 residues: Chromosomal replication initiator protein DnaA (443 aa).

Residues 1–76 are domain I, interacts with DnaA modulators; that stretch reads MMDAWPRCLE…GNGEVALAVG (76 aa). The tract at residues 76–105 is domain II; it reads GSRPRAPEPAPAPVAATIAPQAAPIAPFAG. Residues 106 to 323 are domain III, AAA+ region; sequence NLDSHYTFAN…GALNTLVARA (218 aa). Residues G151, G153, K154, and T155 each contribute to the ATP site. The tract at residues 324–443 is domain IV, binds dsDNA; sequence NFTGRSITVE…WEKLIRKLSE (120 aa).

Belongs to the DnaA family. In terms of assembly, oligomerizes as a right-handed, spiral filament on DNA at oriC.

The protein resides in the cytoplasm. In terms of biological role, plays an essential role in the initiation and regulation of chromosomal replication. ATP-DnaA binds to the origin of replication (oriC) to initiate formation of the DNA replication initiation complex once per cell cycle. Binds the DnaA box (a 9 base pair repeat at the origin) and separates the double-stranded (ds)DNA. Forms a right-handed helical filament on oriC DNA; dsDNA binds to the exterior of the filament while single-stranded (ss)DNA is stabiized in the filament's interior. The ATP-DnaA-oriC complex binds and stabilizes one strand of the AT-rich DNA unwinding element (DUE), permitting loading of DNA polymerase. After initiation quickly degrades to an ADP-DnaA complex that is not apt for DNA replication. Binds acidic phospholipids. The polypeptide is Chromosomal replication initiator protein DnaA (Xanthomonas oryzae pv. oryzae (strain KACC10331 / KXO85)).